Here is a 24-residue protein sequence, read N- to C-terminus: Brevinin-1JDc (24 aa).

A disulfide bond links Cys18 and Cys24.

As to expression, expressed by the skin glands.

It is found in the secreted. Its function is as follows. Has antibacterial activity against E.coli ATCC 25992 (MIC=49 uM), E.coli CIB 84492 (MIC=25 uM), S.aureus ATCC 25923 (MIC=6 uM) and S.aureus CIB 85462 (MIC=3 uM). This is Brevinin-1JDc from Odorrana jingdongensis (Jingdong frog).